The primary structure comprises 447 residues: Probable 7-dehydrocholesterol reductase (447 aa).

Helical transmembrane passes span 24–44, 71–91, 102–124, 133–153, 157–177, 244–264, 281–301, and 309–329; these read LTTA…YLIT, IPSF…FQLI, FVPH…LVYY, IITH…PTII, WGSI…LAYF, YVSN…VDFF, FGWM…TLQA, and IDLS…GYII. NADP(+) is bound by residues Lys-337, Arg-341, Ile-367, Trp-372, and 379 to 380; that span reads NY. The helical transmembrane segment at 393–413 threads the bilayer; sequence ACGFSHFIPYFYCVYMTILLV. NADP(+) is bound by residues Asp-419, 423–427, and Tyr-434; that span reads CSRKY.

This sequence belongs to the ERG4/ERG24 family.

The protein resides in the membrane. It carries out the reaction cholesterol + NADP(+) = 7-dehydrocholesterol + NADPH + H(+). It functions in the pathway steroid biosynthesis; cholesterol biosynthesis. Catalyzes the last step of the cholesterol synthesis pathway, which transforms cholesta-5,7-dien-3beta-ol (7-dehydrocholesterol,7-DHC) into cholesterol by reducing the C7-C8 double bond of its sterol core. This is Probable 7-dehydrocholesterol reductase (DHCR7) from Acanthamoeba polyphaga (Amoeba).